A 102-amino-acid polypeptide reads, in one-letter code: Small ribosomal subunit protein uS10 (102 aa).

Belongs to the universal ribosomal protein uS10 family. As to quaternary structure, part of the 30S ribosomal subunit.

Its function is as follows. Involved in the binding of tRNA to the ribosomes. In Mycoplasma capricolum subsp. capricolum (strain California kid / ATCC 27343 / NCTC 10154), this protein is Small ribosomal subunit protein uS10.